The primary structure comprises 792 residues: Probable exo-1,4-beta-xylosidase xlnD (792 aa).

The N-terminal stretch at 1 to 20 (MSVAKSIAAVLVALLPGALA) is a signal peptide. Asn23, Asn87, Asn118, Asn142, and Asn246 each carry an N-linked (GlcNAc...) asparagine glycan. Residue Asp310 is part of the active site. N-linked (GlcNAc...) asparagine glycans are attached at residues Asn326, Asn385, Asn404, Asn440, Asn477, Asn518, Asn679, and Asn701.

Belongs to the glycosyl hydrolase 3 family.

Its subcellular location is the secreted. It carries out the reaction Hydrolysis of (1-&gt;4)-beta-D-xylans, to remove successive D-xylose residues from the non-reducing termini.. It participates in glycan degradation; xylan degradation. Its function is as follows. Xylan 1,4-beta-xylosidase involved in the hydrolysis of xylan, a major structural heterogeneous polysaccharide found in plant biomass representing the second most abundant polysaccharide in the biosphere, after cellulose. The chain is Probable exo-1,4-beta-xylosidase xlnD (xlnD) from Aspergillus fumigatus (strain ATCC MYA-4609 / CBS 101355 / FGSC A1100 / Af293) (Neosartorya fumigata).